A 511-amino-acid polypeptide reads, in one-letter code: Aldehyde dehydrogenase 2, mitochondrial (511 aa).

The transit peptide at 1 to 21 (MSKSKTKTDKRNQSSLSRIKL) directs the protein to the mitochondrion. A disordered region spans residues 72 to 92 (VSEKSQHDSTEEDITQVSEKS). An NAD(+)-binding site is contributed by 274–279 (GSTLVG). Glutamate 297 functions as the Proton acceptor in the catalytic mechanism. The Nucleophile role is filled by cysteine 331.

This sequence belongs to the aldehyde dehydrogenase family.

It localises to the mitochondrion matrix. The enzyme catalyses an aldehyde + NAD(+) + H2O = a carboxylate + NADH + 2 H(+). It functions in the pathway alcohol metabolism; ethanol degradation; acetate from ethanol: step 2/2. The polypeptide is Aldehyde dehydrogenase 2, mitochondrial (ALD2) (Saccharomyces cerevisiae (Baker's yeast)).